A 164-amino-acid chain; its full sequence is Replication restart protein DnaT (164 aa).

Belongs to the DnaT family. In terms of assembly, homooligomerizes. Interacts with PriB. Component of the replication restart primosome. Primosome assembly occurs via a 'hand-off' mechanism. PriA binds to replication forks, subsequently PriB then DnaT bind; DnaT then displaces ssDNA to generate the helicase loading substrate.

Its function is as follows. Involved in the restart of stalled replication forks, which reloads the replicative helicase on sites other than the origin of replication. Can function in multiple replication restart pathways. Displaces ssDNA from a PriB-ssDNA complex. Probably forms a spiral filament on ssDNA. This chain is Replication restart protein DnaT, found in Buchnera aphidicola subsp. Acyrthosiphon pisum (strain 5A).